A 251-amino-acid polypeptide reads, in one-letter code: tRNA-cytidine(32) 2-sulfurtransferase 2 (251 aa).

A PP-loop motif motif is present at residues 33-38; the sequence is SGGKDS. [4Fe-4S] cluster-binding residues include Cys108, Cys111, and Cys199.

This sequence belongs to the TtcA family. Homodimer. It depends on Mg(2+) as a cofactor. [4Fe-4S] cluster serves as cofactor.

Its subcellular location is the cytoplasm. The catalysed reaction is cytidine(32) in tRNA + S-sulfanyl-L-cysteinyl-[cysteine desulfurase] + AH2 + ATP = 2-thiocytidine(32) in tRNA + L-cysteinyl-[cysteine desulfurase] + A + AMP + diphosphate + H(+). It participates in tRNA modification. Its function is as follows. Catalyzes the ATP-dependent 2-thiolation of cytidine in position 32 of tRNA, to form 2-thiocytidine (s(2)C32). The sulfur atoms are provided by the cysteine/cysteine desulfurase (IscS) system. The sequence is that of tRNA-cytidine(32) 2-sulfurtransferase 2 from Francisella tularensis subsp. tularensis (strain WY96-3418).